Consider the following 68-residue polypeptide: Conotoxin Mi11.1 (68 aa).

An N-terminal signal peptide occupies residues 1 to 26 (MMLRLTSVSCFLLVIACLNLFQVVLT). Disulfide bonds link Cys-29-Cys-43, Cys-36-Cys-48, Cys-42-Cys-52, and Cys-47-Cys-56. Tyr-60 is subject to Tyrosine amide. A propeptide spanning residues 64–68 (ATFQE) is cleaved from the precursor.

Belongs to the conotoxin I2 superfamily. In terms of tissue distribution, expressed by the venom duct.

It localises to the secreted. This is Conotoxin Mi11.1 from Conus miles (Soldier cone).